The chain runs to 1462 residues: Tyrosine-protein phosphatase 69D (1462 aa).

The signal sequence occupies residues 1–28 (MALLYRRMSMLLNIILAYIFLCAICVQG). 2 Ig-like C2-type domains span residues 29-125 (SVKQ…TEFQ) and 131-230 (PSKV…KEIT). Topologically, residues 29 to 805 (SVKQEWAEIG…MDYYLSIGVK (777 aa)) are extracellular. 20 N-linked (GlcNAc...) asparagine glycosylation sites follow: asparagine 40, asparagine 58, asparagine 64, asparagine 85, asparagine 109, asparagine 119, asparagine 162, asparagine 191, asparagine 196, asparagine 209, asparagine 255, asparagine 288, asparagine 302, asparagine 429, asparagine 442, asparagine 451, asparagine 516, asparagine 613, asparagine 701, and asparagine 755. Cysteine 45 and cysteine 112 are joined by a disulfide. A disulfide bond links cysteine 154 and cysteine 214. 3 consecutive Fibronectin type-III domains span residues 237-332 (PQVS…TLSY), 334-435 (PIFI…TMDG), and 439-547 (KPTN…TPDA). Residues 806-823 (AGAVLLGVILVFIVLWVF) traverse the membrane as a helical segment. The Cytoplasmic portion of the chain corresponds to 824–1462 (HHKKTKNELQ…LHHIAESTLD (639 aa)). Tyrosine-protein phosphatase domains follow at residues 893-1156 (FLRE…LLDT) and 1187-1450 (LEVE…IINY). Residues cysteine 1097 and cysteine 1391 each act as phosphocysteine intermediate in the active site.

It belongs to the protein-tyrosine phosphatase family. Receptor class subfamily.

It is found in the membrane. The catalysed reaction is O-phospho-L-tyrosyl-[protein] + H2O = L-tyrosyl-[protein] + phosphate. In terms of biological role, possible cell adhesion receptor. The protein is Tyrosine-protein phosphatase 69D (Ptp69D) of Drosophila melanogaster (Fruit fly).